A 661-amino-acid polypeptide reads, in one-letter code: L-type lectin-domain containing receptor kinase V.5 (661 aa).

Residues 1 to 25 form the signal peptide; that stretch reads MSRELIILCQPILVLFLTLFYNSHG. Over 26 to 282 the chain is Extracellular; the sequence is YFVSQGSVGI…KTSNRTKTVL (257 aa). Positions 30–250 are legume-lectin like; the sequence is QGSVGIGFNG…GAIHYLMGWL (221 aa). Asn45, Asn64, Asn116, Asn198, and Asn276 each carry an N-linked (GlcNAc...) asparagine glycan. A helical transmembrane segment spans residues 283–303; it reads AVCLTVSVFAAFVASWIGFVF. Residues 304 to 661 lie on the Cytoplasmic side of the membrane; the sequence is YLRHKKVKEV…TDSSFVSHGR (358 aa). Residues 338–596 form the Protein kinase domain; sequence FKEKQLLGKG…LGVLCSHQAA (259 aa). ATP-binding positions include 344–352 and Lys367; that span reads LGKGGFGQV. Asp464 functions as the Proton acceptor in the catalytic mechanism.

This sequence in the C-terminal section; belongs to the protein kinase superfamily. Ser/Thr protein kinase family. The protein in the N-terminal section; belongs to the leguminous lectin family. In terms of processing, autophosphorylated on a Ser residue. In terms of tissue distribution, expressed at low levels in stems, leaves, flowers and siliques.

The protein localises to the cell membrane. It carries out the reaction L-seryl-[protein] + ATP = O-phospho-L-seryl-[protein] + ADP + H(+). It catalyses the reaction L-threonyl-[protein] + ATP = O-phospho-L-threonyl-[protein] + ADP + H(+). Confers resistance to the pathogenic oomycetes Phytophthora infestans and Phytophthora capsici, but confers susceptibility to the pathogenic bacteria Pseudomonas syringae. The protein is L-type lectin-domain containing receptor kinase V.5 of Arabidopsis thaliana (Mouse-ear cress).